Reading from the N-terminus, the 386-residue chain is DNA-directed RNA polymerase subunit Rpo1C (386 aa).

The protein belongs to the RNA polymerase beta' chain family. Part of the RNA polymerase complex.

It is found in the cytoplasm. The catalysed reaction is RNA(n) + a ribonucleoside 5'-triphosphate = RNA(n+1) + diphosphate. Functionally, DNA-dependent RNA polymerase (RNAP) catalyzes the transcription of DNA into RNA using the four ribonucleoside triphosphates as substrates. Forms part of the jaw domain. The protein is DNA-directed RNA polymerase subunit Rpo1C of Methanococcus vannielii (strain ATCC 35089 / DSM 1224 / JCM 13029 / OCM 148 / SB).